The primary structure comprises 163 residues: Nucleotide-binding protein MT0592 (163 aa).

This sequence belongs to the YajQ family.

Nucleotide-binding protein. The sequence is that of Nucleotide-binding protein MT0592 from Mycobacterium tuberculosis (strain CDC 1551 / Oshkosh).